Here is a 372-residue protein sequence, read N- to C-terminus: Cytochrome b (372 aa).

The next 4 membrane-spanning stretches (helical) occupy residues 25–45 (FGSM…FLAI), 69–90 (WIMQ…YIHI), 105–125 (WLSG…GYVL), and 170–190 (FFAL…IHIM). Histidine 75 and histidine 89 together coordinate heme b. Residues histidine 174 and histidine 188 each coordinate heme b. Histidine 193 contacts a ubiquinone. Helical transmembrane passes span 218–238 (HKDI…MTLT), 280–300 (LGGT…PFTH), 312–332 (LTQL…WAAT), and 339–358 (FTMI…IMNP).

The protein belongs to the cytochrome b family. The cytochrome bc1 complex contains 3 respiratory subunits (MT-CYB, CYC1 and UQCRFS1), 2 core proteins (UQCRC1 and UQCRC2) and probably 6 low-molecular weight proteins. Heme b is required as a cofactor.

Its subcellular location is the mitochondrion inner membrane. In terms of biological role, component of the ubiquinol-cytochrome c reductase complex (complex III or cytochrome b-c1 complex) that is part of the mitochondrial respiratory chain. The b-c1 complex mediates electron transfer from ubiquinol to cytochrome c. Contributes to the generation of a proton gradient across the mitochondrial membrane that is then used for ATP synthesis. In Lycodon semicarinatus (Ryukyu odd-tooth snake), this protein is Cytochrome b (MT-CYB).